Reading from the N-terminus, the 373-residue chain is UDP-N-acetylglucosamine--N-acetylmuramyl-(pentapeptide) pyrophosphoryl-undecaprenol N-acetylglucosamine transferase (373 aa).

UDP-N-acetyl-alpha-D-glucosamine is bound by residues Thr-13 to Gly-15, Asn-124, Arg-165, Ser-192, and Gln-293.

The protein belongs to the glycosyltransferase 28 family. MurG subfamily.

It is found in the cell inner membrane. The enzyme catalyses di-trans,octa-cis-undecaprenyl diphospho-N-acetyl-alpha-D-muramoyl-L-alanyl-D-glutamyl-meso-2,6-diaminopimeloyl-D-alanyl-D-alanine + UDP-N-acetyl-alpha-D-glucosamine = di-trans,octa-cis-undecaprenyl diphospho-[N-acetyl-alpha-D-glucosaminyl-(1-&gt;4)]-N-acetyl-alpha-D-muramoyl-L-alanyl-D-glutamyl-meso-2,6-diaminopimeloyl-D-alanyl-D-alanine + UDP + H(+). Its pathway is cell wall biogenesis; peptidoglycan biosynthesis. Its function is as follows. Cell wall formation. Catalyzes the transfer of a GlcNAc subunit on undecaprenyl-pyrophosphoryl-MurNAc-pentapeptide (lipid intermediate I) to form undecaprenyl-pyrophosphoryl-MurNAc-(pentapeptide)GlcNAc (lipid intermediate II). The polypeptide is UDP-N-acetylglucosamine--N-acetylmuramyl-(pentapeptide) pyrophosphoryl-undecaprenol N-acetylglucosamine transferase (Sinorhizobium fredii (strain NBRC 101917 / NGR234)).